The sequence spans 160 residues: Oligoribonuclease (160 aa).

The Exonuclease domain maps to 8-158; sequence LIWIDLEMTG…YNKLKKKTLI (151 aa). Residue Tyr-129 is part of the active site.

Belongs to the oligoribonuclease family.

The protein localises to the cytoplasm. 3'-to-5' exoribonuclease specific for small oligoribonucleotides. The protein is Oligoribonuclease (orn) of Buchnera aphidicola subsp. Baizongia pistaciae (strain Bp).